A 297-amino-acid polypeptide reads, in one-letter code: 4-hydroxy-tetrahydrodipicolinate synthase (297 aa).

Thr-49 provides a ligand contact to pyruvate. Tyr-137 functions as the Proton donor/acceptor in the catalytic mechanism. Lys-166 (schiff-base intermediate with substrate) is an active-site residue. Ile-208 contributes to the pyruvate binding site.

The protein belongs to the DapA family. In terms of assembly, homotetramer; dimer of dimers.

The protein resides in the cytoplasm. It catalyses the reaction L-aspartate 4-semialdehyde + pyruvate = (2S,4S)-4-hydroxy-2,3,4,5-tetrahydrodipicolinate + H2O + H(+). The protein operates within amino-acid biosynthesis; L-lysine biosynthesis via DAP pathway; (S)-tetrahydrodipicolinate from L-aspartate: step 3/4. In terms of biological role, catalyzes the condensation of (S)-aspartate-beta-semialdehyde [(S)-ASA] and pyruvate to 4-hydroxy-tetrahydrodipicolinate (HTPA). The polypeptide is 4-hydroxy-tetrahydrodipicolinate synthase (Chlorobium phaeobacteroides (strain BS1)).